Consider the following 548-residue polypeptide: Chaperonin GroEL 2 (548 aa).

Residues 29-32, 86-90, G418, 482-484, and D498 each bind ATP; these read TLGP, DGTTT, and NAA.

Belongs to the chaperonin (HSP60) family. As to quaternary structure, forms a cylinder of 14 subunits composed of two heptameric rings stacked back-to-back. Interacts with the co-chaperonin GroES.

It localises to the cytoplasm. The catalysed reaction is ATP + H2O + a folded polypeptide = ADP + phosphate + an unfolded polypeptide.. In terms of biological role, together with its co-chaperonin GroES, plays an essential role in assisting protein folding. The GroEL-GroES system forms a nano-cage that allows encapsulation of the non-native substrate proteins and provides a physical environment optimized to promote and accelerate protein folding. The protein is Chaperonin GroEL 2 of Corynebacterium glutamicum (strain ATCC 13032 / DSM 20300 / JCM 1318 / BCRC 11384 / CCUG 27702 / LMG 3730 / NBRC 12168 / NCIMB 10025 / NRRL B-2784 / 534).